The following is an 830-amino-acid chain: Periplasmic nitrate reductase 2 (830 aa).

The tat-type signal signal peptide spans 1–31 (MKVSRRKFIKAQAVASAAAAAGISIPISASN). Residues 41–97 (ITWEKAPCRFCGTGCSVNVGTKEGKVVATHGDIKSPVNRGLNCVKGYFLSKIMYGKD) enclose the 4Fe-4S Mo/W bis-MGD-type domain. [4Fe-4S] cluster is bound by residues Cys-48, Cys-51, Cys-55, and Cys-83. Mo-bis(molybdopterin guanine dinucleotide)-binding positions include Lys-85, Gln-152, Asn-177, Cys-181, 245 to 249 (STFEH), 264 to 266 (QSD), Met-374, Gln-378, Asn-484, 510 to 511 (SE), Lys-533, Asp-560, and 720 to 729 (TGRVIEHWHS). Trp-796 contributes to the substrate binding site. The Mo-bis(molybdopterin guanine dinucleotide) site is built by Asn-804 and Lys-821.

The protein belongs to the prokaryotic molybdopterin-containing oxidoreductase family. NasA/NapA/NarB subfamily. In terms of assembly, component of the periplasmic nitrate reductase NapAB complex composed of NapA and NapB. Requires [4Fe-4S] cluster as cofactor. Mo-bis(molybdopterin guanine dinucleotide) serves as cofactor. In terms of processing, predicted to be exported by the Tat system. The position of the signal peptide cleavage has not been experimentally proven.

It is found in the periplasm. The catalysed reaction is 2 Fe(II)-[cytochrome] + nitrate + 2 H(+) = 2 Fe(III)-[cytochrome] + nitrite + H2O. Catalytic subunit of the periplasmic nitrate reductase complex NapAB. Receives electrons from NapB and catalyzes the reduction of nitrate to nitrite. The chain is Periplasmic nitrate reductase 2 from Photobacterium profundum (strain SS9).